Consider the following 138-residue polypeptide: Membrane glycoprotein UL139 (138 aa).

The N-terminal stretch at 1-15 (MLWILVLFALAASAS) is a signal peptide. The tract at residues 17–37 (TTTGTSSNSSQSTSAGTTNTT) is disordered. Residues 64–84 (GWTLSGLLLIFTCCLCCFWLV) form a helical membrane-spanning segment. Residues 113–129 (SDATLPMGTTGSYTPPQ) are compositionally biased toward polar residues. The interval 113-138 (SDATLPMGTTGSYTPPQDGSFPPPPR) is disordered.

The protein resides in the host membrane. This Homo sapiens (Human) protein is Membrane glycoprotein UL139 (UL139).